A 563-amino-acid chain; its full sequence is Benzaldehyde lyase (563 aa).

It belongs to the TPP enzyme family. The cofactor is a metal cation. Requires thiamine diphosphate as cofactor.

It catalyses the reaction benzoin = 2 benzaldehyde. Cleavage of benzoin-anisoin acyloin linkage. This chain is Benzaldehyde lyase (bznB), found in Pseudomonas fluorescens.